The sequence spans 432 residues: Trigger factor (432 aa).

In terms of domain architecture, PPIase FKBP-type spans 161–246 (EDRVTIDFSG…LKKVEERELP (86 aa)).

The protein belongs to the FKBP-type PPIase family. Tig subfamily.

The protein resides in the cytoplasm. It carries out the reaction [protein]-peptidylproline (omega=180) = [protein]-peptidylproline (omega=0). In terms of biological role, involved in protein export. Acts as a chaperone by maintaining the newly synthesized protein in an open conformation. Functions as a peptidyl-prolyl cis-trans isomerase. The polypeptide is Trigger factor (Enterobacter sp. (strain 638)).